We begin with the raw amino-acid sequence, 156 residues long: Small ribosomal subunit protein uS7 (156 aa).

It belongs to the universal ribosomal protein uS7 family. In terms of assembly, part of the 30S ribosomal subunit. Contacts proteins S9 and S11.

One of the primary rRNA binding proteins, it binds directly to 16S rRNA where it nucleates assembly of the head domain of the 30S subunit. Is located at the subunit interface close to the decoding center, probably blocks exit of the E-site tRNA. In Laribacter hongkongensis (strain HLHK9), this protein is Small ribosomal subunit protein uS7.